The following is a 210-amino-acid chain: Chloramphenicol acetyltransferase (210 aa).

His79 is a catalytic residue.

It belongs to the transferase hexapeptide repeat family.

The enzyme catalyses chloramphenicol + acetyl-CoA = chloramphenicol 3-acetate + CoA. Functionally, this enzyme is an effector of chloramphenicol resistance in bacteria. This Escherichia coli protein is Chloramphenicol acetyltransferase (catB2).